The chain runs to 194 residues: NADH-quinone oxidoreductase subunit B (194 aa).

A compositionally biased stretch (pro residues) spans 1–11 (MGVIATPPPSV). The interval 1–24 (MGVIATPPPSVQGPSSQVPSSAPI) is disordered. Positions 12–21 (QGPSSQVPSS) are enriched in low complexity. Residues Cys-72, Cys-73, Cys-137, and Cys-167 each coordinate [4Fe-4S] cluster.

This sequence belongs to the complex I 20 kDa subunit family. In terms of assembly, NDH-1 is composed of 14 different subunits. Subunits NuoB, C, D, E, F, and G constitute the peripheral sector of the complex. Requires [4Fe-4S] cluster as cofactor.

The protein resides in the cell inner membrane. The catalysed reaction is a quinone + NADH + 5 H(+)(in) = a quinol + NAD(+) + 4 H(+)(out). Its function is as follows. NDH-1 shuttles electrons from NADH, via FMN and iron-sulfur (Fe-S) centers, to quinones in the respiratory chain. The immediate electron acceptor for the enzyme in this species is believed to be ubiquinone. Couples the redox reaction to proton translocation (for every two electrons transferred, four hydrogen ions are translocated across the cytoplasmic membrane), and thus conserves the redox energy in a proton gradient. The sequence is that of NADH-quinone oxidoreductase subunit B from Rhodospirillum centenum (strain ATCC 51521 / SW).